A 310-amino-acid polypeptide reads, in one-letter code: Olfactory receptor 2A12 (310 aa).

The Extracellular segment spans residues 1-24 (MESNQTWITEVILLGFQVDPALEL). N-linked (GlcNAc...) asparagine glycosylation is present at asparagine 4. A helical transmembrane segment spans residues 25 to 48 (FLFGFFLLFYSLTLMGNGIILGLI). At 49-56 (YLDSRLHT) the chain is on the cytoplasmic side. The chain crosses the membrane as a helical span at residues 57-78 (PMYVFLSHLAIVDMSYASSTVP). Residues 79-99 (KMLANLVMHKKVISFAPCILQ) lie on the Extracellular side of the membrane. Residues cysteine 96 and cysteine 188 are joined by a disulfide bond. Residues 100–119 (TFLYLAFAITECLILVMMCY) form a helical membrane-spanning segment. The Cytoplasmic segment spans residues 120 to 138 (DRYVAICHPLQYTLIMNWR). A helical transmembrane segment spans residues 139–157 (VCTVLASTCWIFSFLLALV). At 158–194 (HITLILRLPFCGPQKINHFFCQIMSVFKLACADTRLN) the chain is on the extracellular side. The helical transmembrane segment at 195–218 (QVVLFAGSAFILVGPLCLVLVSYL) threads the bilayer. Over 219 to 235 (HILVAILRIQSGEGRRK) the chain is Cytoplasmic. Residues 236 to 258 (AFSTCSSHLCVVGLFFGSAIVMY) traverse the membrane as a helical segment. The Extracellular segment spans residues 259-271 (MAPKSSHSQERRK). The chain crosses the membrane as a helical span at residues 272–291 (ILSLFYSLFNPILNPLIYSL). The Cytoplasmic portion of the chain corresponds to 292-310 (RNAEVKGALKRVLWKQRSM).

This sequence belongs to the G-protein coupled receptor 1 family.

The protein localises to the cell membrane. Its function is as follows. Odorant receptor. The sequence is that of Olfactory receptor 2A12 (OR2A12) from Homo sapiens (Human).